The chain runs to 289 residues: Protease HtpX homolog (289 aa).

Transmembrane regions (helical) follow at residues 7-26 and 31-48; these read TAAL…YWVI and GLII…FSWY. Residue H132 participates in Zn(2+) binding. E133 is an active-site residue. H136 contributes to the Zn(2+) binding site. 2 helical membrane passes run 151 to 171 and 182 to 202; these read VAGA…FGGG and LGVL…QLAI. E207 contacts Zn(2+).

The protein belongs to the peptidase M48B family. The cofactor is Zn(2+).

The protein localises to the cell inner membrane. The protein is Protease HtpX homolog of Nostoc punctiforme (strain ATCC 29133 / PCC 73102).